The chain runs to 403 residues: Tyrosine--tRNA ligase (403 aa).

The 'HIGH' region motif lies at 42–51 (PTAPDLHLGH). The 'KMSKS' region signature appears at 226–230 (KMSKS). ATP is bound at residue Lys-229. An S4 RNA-binding domain is found at 336 to 396 (MPISAVLNKA…GKKAFGRVTL (61 aa)).

Belongs to the class-I aminoacyl-tRNA synthetase family. TyrS type 2 subfamily. As to quaternary structure, homodimer.

It is found in the cytoplasm. The catalysed reaction is tRNA(Tyr) + L-tyrosine + ATP = L-tyrosyl-tRNA(Tyr) + AMP + diphosphate + H(+). Catalyzes the attachment of tyrosine to tRNA(Tyr) in a two-step reaction: tyrosine is first activated by ATP to form Tyr-AMP and then transferred to the acceptor end of tRNA(Tyr). The chain is Tyrosine--tRNA ligase from Pseudomonas syringae pv. syringae (strain B728a).